The sequence spans 390 residues: Leu/Ile/Val-binding protein homolog 6 (390 aa).

A signal peptide spans 1–21 (MKKIALTALAVFSLAASAAYA).

This sequence belongs to the leucine-binding protein family.

Component of an amino-acid transport system. This Brucella melitensis biotype 1 (strain ATCC 23456 / CCUG 17765 / NCTC 10094 / 16M) protein is Leu/Ile/Val-binding protein homolog 6.